The primary structure comprises 462 residues: L-seryl-tRNA(Sec) selenium transferase (462 aa).

N6-(pyridoxal phosphate)lysine is present on K292.

Belongs to the SelA family. The cofactor is pyridoxal 5'-phosphate.

The protein localises to the cytoplasm. The enzyme catalyses L-seryl-tRNA(Sec) + selenophosphate + H(+) = L-selenocysteinyl-tRNA(Sec) + phosphate. It functions in the pathway aminoacyl-tRNA biosynthesis; selenocysteinyl-tRNA(Sec) biosynthesis; selenocysteinyl-tRNA(Sec) from L-seryl-tRNA(Sec) (bacterial route): step 1/1. Functionally, converts seryl-tRNA(Sec) to selenocysteinyl-tRNA(Sec) required for selenoprotein biosynthesis. This Clostridium perfringens (strain 13 / Type A) protein is L-seryl-tRNA(Sec) selenium transferase.